The following is a 274-amino-acid chain: NAD kinase (274 aa).

The active-site Proton acceptor is D59. Residues 59–60 (DG), 133–134 (ND), R144, D163, 174–179 (TAYALS), and Q233 each bind NAD(+).

This sequence belongs to the NAD kinase family. Requires a divalent metal cation as cofactor.

The protein resides in the cytoplasm. The catalysed reaction is NAD(+) + ATP = ADP + NADP(+) + H(+). In terms of biological role, involved in the regulation of the intracellular balance of NAD and NADP, and is a key enzyme in the biosynthesis of NADP. Catalyzes specifically the phosphorylation on 2'-hydroxyl of the adenosine moiety of NAD to yield NADP. The protein is NAD kinase of Aquifex aeolicus (strain VF5).